Reading from the N-terminus, the 688-residue chain is MWCLVLFSLLASFSAEPTMHGEILSPNYPQAYPNDVVKSWDIEVPEGFGIHLYFTHVDIEPSESCAYDSVQIISGGIEEGRLCGQKTSKSPNSPIIEEFQFPYNKLQVVFTSDFSNEERFTGFAAYYTAIDINECTDFTDVPCSHFCNNFIGGYFCSCPPEYFLHDDMRNCGVNCSGDVFTALIGEISSPNYPNPYPENSRCEYQIQLQEGFQVVVTMQREDFDVEPADSEGNCPDSLTFASKNQQFGPYCGNGFPGPLTIRTQSNTLGIVFQTDLMGQKKGWKLRYHGDPISCAKKITANSTWEPDKAKYVFKDVVKITCVDGFEVVEGHVSSTSYYSTCQSDGQWSNSGLKCQPVYCGIPDPIANGKVEEPENSVFGTVVHYTCEEPYYYMEHEEGGEYRCAANGRWVNDQLGIELPRCIPACGVPTEPFQVHQRIFGGQPAKIENFPWQVFFNHPRASGALINEYWVLTAAHVLEKISDPLMYVGTMSVRTTLLENAQRLYSKRVFIHPSWKKEDDPNTRTNFDNDIALVQLKDPVKMGPKVSPICLPGTSSEYNVSPGDMGLISGWGSTEKKVFVINLRGAKVPVTSLETCKQVKEENPTVRPEDYVFTDNMICAGEKGVDSCHGDSGGAFAFQVPNVTVPKFYVAGLVSWGKRCGTYGVYTKVKNYVDWILKTMQENSGPRKD.

The N-terminal stretch at 1 to 15 is a signal peptide; it reads MWCLVLFSLLASFSA. The 115-residue stretch at 16-130 folds into the CUB 1 domain; it reads EPTMHGEILS…TGFAAYYTAI (115 aa). Ca(2+) is bound by residues E60, D68, D113, D131, I132, and E134. C65 and C83 are disulfide-bonded. One can recognise an EGF-like; calcium-binding domain in the interval 131–172; it reads DINECTDFTDVPCSHFCNNFIGGYFCSCPPEYFLHDDMRNCG. 3 cysteine pairs are disulfide-bonded: C135-C147, C143-C156, and C158-C171. N149, F150, and G153 together coordinate Ca(2+). Position 149 is a (3R)-3-hydroxyasparagine (N149). A glycan (N-linked (GlcNAc...) asparagine) is linked at N174. A disulfide bond links C175 and C202. Residues 175-290 form the CUB 2 domain; that stretch reads CSGDVFTALI…KGWKLRYHGD (116 aa). 5 residues coordinate Ca(2+): E226, D236, D275, G278, and Q279. A disulfide bridge links C234 with C251. Sushi domains lie at 292 to 356 and 357 to 423; these read ISCA…KCQP and VYCG…RCIP. Disulfide bonds link C294–C341, C321–C354, C359–C403, C386–C421, C425–C549, C595–C618, and C627–C659. Residues 438–680 enclose the Peptidase S1 domain; the sequence is IFGGQPAKIE…YVDWILKTMQ (243 aa). Active-site charge relay system residues include H475 and D529. Catalysis depends on S631, which acts as the Charge relay system. The N-linked (GlcNAc...) asparagine glycan is linked to N641.

It belongs to the peptidase S1 family. In terms of assembly, core component of the complement C1 complex, a calcium-dependent complex composed of 1 molecule of the C1Q subcomplex, 2 molecules of C1R and 2 molecules of C1S. The C1Q subcomplex is composed 18 subunits: 3 chains of C1QA, C1QB, and C1QC trimerize to form 6 collagen-like triple helices connected to six globular ligand-recognition modules. In terms of processing, cleaved and activated by C1R to generate Complement C1s subcomponent heavy and light chains. Post-translationally, the iron and 2-oxoglutarate dependent 3-hydroxylation of aspartate and asparagine is (R) stereospecific within EGF domains. As to expression, predominantly expressed in liver.

The protein resides in the secreted. The protein localises to the cell surface. It catalyses the reaction Cleavage of Arg-|-Ala bond in complement component C4 to form C4a and C4b, and Lys(or Arg)-|-Lys bond in complement component C2 to form C2a and C2b: the 'classical' pathway C3 convertase.. Cleaved and activated by C1R. Immunoglobulin-binding promotes autoactivation of C1R, which results in the cleavage of the Arg-Ile bond in the catalytic domain. Inhibited by C1 inhibitor (SERPING1). Its function is as follows. Component of the complement C1 complex, a multiprotein complex that initiates the classical pathway of the complement system, a cascade of proteins that leads to phagocytosis and breakdown of pathogens and signaling that strengthens the adaptive immune system. C1S is activated following association of the C1 complex with immunoglobulins (IgG or IgM) complexed with antigens to form antigen-antibody complexes on the surface of pathogens. C1S is cleaved and activated by C1R to generate C1s subcomponent heavy and light chains. C1s subcomponent light chain then cleaves and activates C2 and C4, the next components of the classical complement pathway. Functionally, serine protease component of the complement C1 complex, which catalyzes cleavage and activation of C2 and C4, the next components of the classical complement pathway. Also cleaves IGFBP5 and thereby inhibits the trophic effects of IGF1. This Mus musculus (Mouse) protein is Complement C1s-1 subcomponent.